The following is a 365-amino-acid chain: Alanine racemase (365 aa).

The active-site Proton acceptor; specific for D-alanine is K32. K32 carries the post-translational modification N6-(pyridoxal phosphate)lysine. R128 contacts substrate. Catalysis depends on Y257, which acts as the Proton acceptor; specific for L-alanine. M305 is a binding site for substrate.

The protein belongs to the alanine racemase family. Requires pyridoxal 5'-phosphate as cofactor.

It carries out the reaction L-alanine = D-alanine. The protein operates within amino-acid biosynthesis; D-alanine biosynthesis; D-alanine from L-alanine: step 1/1. Catalyzes the interconversion of L-alanine and D-alanine. May also act on other amino acids. In Francisella tularensis subsp. novicida (strain U112), this protein is Alanine racemase (alr).